Reading from the N-terminus, the 144-residue chain is Large ribosomal subunit protein uL13 (144 aa).

It belongs to the universal ribosomal protein uL13 family. As to quaternary structure, part of the 50S ribosomal subunit.

In terms of biological role, this protein is one of the early assembly proteins of the 50S ribosomal subunit, although it is not seen to bind rRNA by itself. It is important during the early stages of 50S assembly. The polypeptide is Large ribosomal subunit protein uL13 (Nitratidesulfovibrio vulgaris (strain ATCC 29579 / DSM 644 / CCUG 34227 / NCIMB 8303 / VKM B-1760 / Hildenborough) (Desulfovibrio vulgaris)).